The primary structure comprises 117 residues: Protein RALF-like 27 (117 aa).

A signal peptide spans 1–27; the sequence is MTKTFFSFSFFFTSSLLLLLAATSATA. A propeptide spans 28-71 (removed in mature form); that stretch reads STGNVTSGLRYDGCAPGDTVGECITATVEEEDEEGVEAVVRRIL. Asn31 carries N-linked (GlcNAc...) asparagine glycosylation. Cystine bridges form between Cys88–Cys96 and Cys107–Cys113.

The protein belongs to the plant rapid alkalinization factor (RALF) family.

The protein resides in the secreted. Functionally, cell signaling peptide that may regulate plant stress, growth, and development. Mediates a rapid alkalinization of extracellular space by mediating a transient increase in the cytoplasmic Ca(2+) concentration leading to a calcium-dependent signaling events through a cell surface receptor and a concomitant activation of some intracellular mitogen-activated protein kinases. This chain is Protein RALF-like 27 (RALFL27), found in Arabidopsis thaliana (Mouse-ear cress).